We begin with the raw amino-acid sequence, 785 residues long: Phenylalanine--tRNA ligase beta subunit (785 aa).

The tRNA-binding domain occupies 39 to 147 (FPIPRGVVFA…DALPPGTPLS (109 aa)). The region spanning 399–474 (KPPEAIPFRP…RIQGYETIPL (76 aa)) is the B5 domain. Mg(2+)-binding residues include Asp-452, Asp-458, Glu-461, and Glu-462. Residues 688-780 (SRHPAAFRDL…ALRARGFGLR (93 aa)) form the FDX-ACB domain.

Belongs to the phenylalanyl-tRNA synthetase beta subunit family. Type 1 subfamily. Tetramer of two alpha and two beta subunits. Requires Mg(2+) as cofactor.

Its subcellular location is the cytoplasm. It carries out the reaction tRNA(Phe) + L-phenylalanine + ATP = L-phenylalanyl-tRNA(Phe) + AMP + diphosphate + H(+). This chain is Phenylalanine--tRNA ligase beta subunit (pheT), found in Thermus thermophilus (strain ATCC 27634 / DSM 579 / HB8).